The following is a 2742-amino-acid chain: Polycystin-1-like protein 1 (2742 aa).

Residues 1 to 1602 (MFCLWIFSLA…LDQFLSVSRD (1602 aa)) are Extracellular-facing. 5 N-linked (GlcNAc...) asparagine glycosylation sites follow: Asn35, Asn133, Asn149, Asn220, and Asn267. PKD domains are found at residues 286–372 (AVRI…VKLN) and 370–454 (KLNR…PCQP). N-linked (GlcNAc...) asparagine glycosylation is found at Asn383, Asn397, Asn486, Asn545, Asn693, Asn709, and Asn735. The region spanning 452–1338 (CQPPPVKNLG…ITFFLPASLI (887 aa)) is the REJ domain. Disordered stretches follow at residues 767 to 829 (SPSR…QSDP) and 846 to 908 (DLRG…RPSV). Polar residues predominate over residues 779–799 (SELTDSPVSSVTVGFSGSESF). Residues 880–893 (SFPSDSDSFSHSSS) show a composition bias toward low complexity. N-linked (GlcNAc...) asparagine glycosylation is found at Asn1080, Asn1101, Asn1201, Asn1318, Asn1437, Asn1490, and Asn1568. A GAIN-B domain is found at 1436–1587 (HNFSITQEHL…KVLQQQIQSS (152 aa)). 2 disulfide bridges follow: Cys1541/Cys1569 and Cys1556/Cys1571. Residues 1541 to 1587 (CLSWEDQQGSWTQNGCRAQTNDKTSAVNCSCHHLKPLKVLQQQIQSS) are GPS. Residues 1603–1623 (LTVVFVLLLCVSLNIPVLVWC) form a helical membrane-spanning segment. Over 1624–1812 (KKTDATSEEN…SPHLFTRAQR (189 aa)) the chain is Cytoplasmic. The 122-residue stretch at 1648 to 1769 (HFYAVTVHTG…GDGQVERMLR (122 aa)) folds into the PLAT domain. The helical transmembrane segment at 1813 to 1833 (LCVCLLLFLGYACVNIIITHQ) threads the bilayer. Over 1834–1851 (RDDQLPFDLGVIDVTSVS) the chain is Extracellular. The chain crosses the membrane as a helical span at residues 1852 to 1872 (IATGLVSVVAVLPVAMVISFL). Residues 1873–2005 (FRVKSGRMTL…YRLASLLYHC (133 aa)) are Cytoplasmic-facing. Residues 2006–2026 (VAWTLCLLFCLSCLILSAVLG) traverse the membrane as a helical segment. The Extracellular segment spans residues 2027 to 2040 (TRLNSGKILHWIHS). The chain crosses the membrane as a helical span at residues 2041–2061 (LFVSLTFCFFVIHPATILVLA). Over 2062-2151 (AVVSWRFKRS…KQAVIHKMLR (90 aa)) the chain is Cytoplasmic. A helical transmembrane segment spans residues 2152 to 2172 (DLCLCGSMFFLMVCITYGSPV). At 2173–2344 (DEHYPLNAAF…QSVRLYHSPS (172 aa)) the chain is on the extracellular side. An N-linked (GlcNAc...) asparagine glycan is attached at Asn2218. A helical membrane pass occupies residues 2345 to 2365 (MLDYTVMVWQLLFLLLSLVNL). Topologically, residues 2366 to 2378 (YHQTSTAAQHGLM) are cytoplasmic. Residues 2379–2401 (GYWKTTSISVEVSLVIVSLVYYV) form a helical membrane-spanning segment. The Extracellular segment spans residues 2402–2442 (HYVYHPTMVMEVAEQLRRNHREHVDVSTLANSEQFSRTLRG). A helical membrane pass occupies residues 2443–2463 (IILFLLAVKCVTVVRLNRILA). The Cytoplasmic segment spans residues 2464-2467 (PSMP). The chain crosses the membrane as a helical span at residues 2468–2488 (LLSLSSLLWPAISGLLLLSIF). Residues 2489-2528 (SCMGRLLYIERTFHSIQTVLWHFWSLRKSRDLISLWRDFY) lie on the Extracellular side of the membrane. Residues 2529 to 2549 (YFGLLYASSAMLTTMVFAVMI) form a helical membrane-spanning segment. At 2550-2742 (RKAKRSPSTK…LVHHEQGTKN (193 aa)) the chain is on the cytoplasmic side.

It belongs to the polycystin family. In terms of assembly, heterodimer. Interacts with pkd2 to form a calcium channel. Interacts with pkd2l1 to form ciliary calcium channel. In terms of tissue distribution, expressed in Kupffer's vesicle, an organ equivalent to the node.

It is found in the cell projection. The protein resides in the cilium membrane. Functionally, component of a calcium-permeant ion channel formed by PKD1L2 and PKD1L1 in primary cilia, where it controls cilium calcium concentration, without affecting cytoplasmic calcium concentration, and regulates sonic hedgehog/SHH signaling and GLI2 transcription. The PKD1L1:PKD2L1 channel complex is mechanosensitive only at high pressures and is highly temperature sensitive. Also involved in left/right axis specification downstream of nodal flow by forming a complex with PKD2 in cilia to facilitate flow detection in left/right patterning. In Oryzias latipes (Japanese rice fish), this protein is Polycystin-1-like protein 1.